Here is a 247-residue protein sequence, read N- to C-terminus: Granzyme B(G,H) (247 aa).

A signal peptide spans 1-18 (MKILLLLLTLSLASRTKA). Residues 19–20 (GE) constitute a propeptide, activation peptide. The region spanning 21 to 245 (IIGGHEVKPH…FLSWIKKTMK (225 aa)) is the Peptidase S1 domain. A disulfide bond links cysteine 49 and cysteine 65. The Charge relay system role is filled by histidine 64. An N-linked (GlcNAc...) asparagine glycan is attached at asparagine 71. The Charge relay system role is filled by aspartate 108. Cystine bridges form between cysteine 142/cysteine 209 and cysteine 173/cysteine 188. A glycan (N-linked (GlcNAc...) asparagine) is linked at asparagine 182. The Charge relay system role is filled by serine 203.

Belongs to the peptidase S1 family. Granzyme subfamily.

The protein resides in the secreted. The protein localises to the cytolytic granule. The catalysed reaction is Preferential cleavage: -Asp-|-Xaa- &gt;&gt; -Asn-|-Xaa- &gt; -Met-|-Xaa-, -Ser-|-Xaa-.. With respect to regulation, inactivated by the serine protease inhibitor diisopropylfluorophosphate. Abundant protease in the cytosolic granules of cytotoxic T-cells and NK-cells which activates caspase-independent pyroptosis when delivered into the target cell through the immunological synapse. It cleaves after Asp. Once delivered into the target cell, acts by catalyzing cleavage of gasdermin-E (GSDME), releasing the pore-forming moiety of GSDME, thereby triggering pyroptosis and target cell death. Seems to be linked to an activation cascade of caspases (aspartate-specific cysteine proteases) responsible for apoptosis execution. Cleaves caspase-3 and -9 (CASP3 and CASP9, respectively) to give rise to active enzymes mediating apoptosis. Cleaves and activates CASP7 in response to bacterial infection, promoting plasma membrane repair. The polypeptide is Granzyme B(G,H) (Gzmb) (Mus musculus (Mouse)).